The following is a 502-amino-acid chain: MNLRPEEISSVIKEQIKNYSMQLEVSDVGTVIQVADGIARIHGLENAMQGELLEFPGDVYGMVLNLEEDNVGAVLLGDMKNINEGDTVKTTGRVVEVPVGDALLGRVVNALGQPIDGKGPIETKKYRQIERVASGVIARKSVDTPLQTGIKAIDSMVPIGRGQRELIIGDKQTGKTAIAIDTIINQKGQNVKCIYVAIGQKASTVANIVKTLEEYGALDYTTVVASTASELAPLQYIAPYSGCAIGEEWMESGQDVLVIYDDLTKHAAAYRTLSLLLKRPPGREAYPGDVFYLHSRLLERAARLNDELGGGSLTALPIIETQAGDVSAYIPTNVISITDGQIYLETDMFNAGFRPAVNAGLSVSRVGGSAQIKAMKKIAGPIRIELAQYRELAAFAQFGSDLDADTKEKLAQGERIREILKQPQYKPMPVEYQVIIIFAATKKYLLDIEVSKIRSFEKELFEFIDTKYPEIPASIRDKKVMDEECEKALITAIENFKKEFTN.

169-176 (GDKQTGKT) serves as a coordination point for ATP.

It belongs to the ATPase alpha/beta chains family. As to quaternary structure, F-type ATPases have 2 components, CF(1) - the catalytic core - and CF(0) - the membrane proton channel. CF(1) has five subunits: alpha(3), beta(3), gamma(1), delta(1), epsilon(1). CF(0) has three main subunits: a(1), b(2) and c(9-12). The alpha and beta chains form an alternating ring which encloses part of the gamma chain. CF(1) is attached to CF(0) by a central stalk formed by the gamma and epsilon chains, while a peripheral stalk is formed by the delta and b chains.

It localises to the cell membrane. It catalyses the reaction ATP + H2O + 4 H(+)(in) = ADP + phosphate + 5 H(+)(out). Functionally, produces ATP from ADP in the presence of a proton gradient across the membrane. The alpha chain is a regulatory subunit. The sequence is that of ATP synthase subunit alpha from Lachnoclostridium phytofermentans (strain ATCC 700394 / DSM 18823 / ISDg) (Clostridium phytofermentans).